A 336-amino-acid polypeptide reads, in one-letter code: Potassium channel subfamily K member 1 (336 aa).

Residues 1 to 20 (MLQSLAGSSCVRLVERHRSA) are Cytoplasmic-facing. Residues 21 to 41 (WCFGFLVLGYLLYLVFGAVVF) form a helical membrane-spanning segment. Over 42–103 (SSVELPYEDL…SNASGNWNWD (62 aa)) the chain is Extracellular. An N-linked (GlcNAc...) asparagine glycan is attached at Asn95. An intramembrane region (helical) is located at residues 104-116 (FASALFFASTVLS). An intramembrane segment occupies 117 to 122 (TTGYGH). A selectivity filter 1 region spans residues 117 to 122 (TTGYGH). At 123–132 (TVPLSDGGKA) the chain is on the extracellular side. The chain crosses the membrane as a helical span at residues 133–156 (FCIIYSVIGIPFTLLFLTAVVQRV). The Cytoplasmic portion of the chain corresponds to 157–181 (TVHVTRRPVLYFHVRWGFSKQVVAI). The chain crosses the membrane as a helical span at residues 182-202 (VHAVLLGLITVSCFFFIPAAV). Topologically, residues 203–211 (FSVLEDDWN) are extracellular. Positions 212–224 (FLESFYFCFISLS) form an intramembrane region, helical. Positions 225–230 (TIGLGD) are selectivity filter 2. The stretch at 225 to 231 (TIGLGDY) is an intramembrane region. Topologically, residues 232 to 243 (VPGEGYNQKFRE) are extracellular. The helical transmembrane segment at 244–267 (LYKIGITCYLLLGLIAMLVVLETF) threads the bilayer. Topologically, residues 268-336 (CELHELKKFR…SACADGPANH (69 aa)) are cytoplasmic. Lys274 participates in a covalent cross-link: Glycyl lysine isopeptide (Lys-Gly) (interchain with G-Cter in SUMO). The interval 293 to 299 (IIEHDQL) is important for intracellular retention in recycling endosomes. The segment at 315–336 (QKQNEPFVATPSSACADGPANH) is disordered. Ser326 is subject to Phosphoserine.

It belongs to the two pore domain potassium channel (TC 1.A.1.8) family. Homodimer; disulfide-linked. Heterodimer with KCNK2; disulfide-linked. In astrocytes, forms mostly heterodimeric potassium channels with KCNK2, with only a minor proportion of functional channels containing homodimeric KCNK1. Interacts with KCNK3 and KCNK9, forming functional heterodimeric channels. Interacts with GNG4. Identified in a complex with PSD and ARF6; interacts only with PSD that is bound to ARF6. Interacts with UBE2I. In terms of processing, sumoylation is controversial. Sumoylated by UBE2I. Not sumoylated when expressed in xenopus oocytes or mammalian cells. Sumoylation inactivates the channel, but does not interfere with expression at the cell membrane. Sumoylation of a single subunit is sufficient to silence the dimeric channel. Sumoylation of KCNK1 is sufficient to silence heterodimeric channels formed by KCNK1 and KCNK3 or KCNK9. Desumoylated by SENP1; this activates the channel. Desumoylated by SENP1; this strongly increases halothane-mediated activation of heterodimeric channels formed with KCNK9. SENP1 treatment has no effect. In terms of tissue distribution, expressed in renal distal tubules, especially in cortical collecting duct and cortical thick ascending limb, with lower levels in the connecting tubule.

Its subcellular location is the cell membrane. It is found in the recycling endosome. It localises to the synaptic cell membrane. The protein localises to the cytoplasmic vesicle. The protein resides in the perikaryon. Its subcellular location is the cell projection. It is found in the dendrite. It localises to the apical cell membrane. It carries out the reaction K(+)(in) = K(+)(out). It catalyses the reaction NH4(+)(in) = NH4(+)(out). The catalysed reaction is Na(+)(in) = Na(+)(out). The enzyme catalyses Rb(+)(in) = Rb(+)(out). It carries out the reaction Cs(+)(in) = Cs(+)(out). It catalyses the reaction Li(+)(in) = Li(+)(out). The catalysed reaction is L-glutamate(out) = L-glutamate(in). The enzyme catalyses chloride(in) = chloride(out). In terms of biological role, ion channel that contributes to passive transmembrane potassium transport and to the regulation of the resting membrane potential in brain astrocytes, but also in kidney and in other tissues. Forms dimeric channels through which potassium ions pass in accordance with their electrochemical gradient. The channel is selective for K(+) ions at physiological potassium concentrations and at neutral pH, but becomes permeable to Na(+) at subphysiological K(+) levels and upon acidification of the extracellular medium. The homodimer has very low potassium channel activity, when expressed in heterologous systems, and can function as weakly inward rectifying potassium channel. Channel activity is modulated by activation of serotonin receptors. Heterodimeric channels containing KCNK1 and KCNK2 have much higher activity, and may represent the predominant form in astrocytes. Heterodimeric channels containing KCNK1 and KCNK3 or KCNK9 have much higher activity. Heterodimeric channels formed by KCNK1 and KCNK9 may contribute to halothane-sensitive currents. Mediates outward rectifying potassium currents in dentate gyrus granule cells and contributes to the regulation of their resting membrane potential. Contributes to the regulation of action potential firing in dentate gyrus granule cells and down-regulates their intrinsic excitability. In astrocytes, the heterodimer formed by KCNK1 and KCNK2 is required for rapid glutamate release in response to activation of G-protein coupled receptors, such as F2R and CNR1. Required for normal ion and water transport in the kidney. Contributes to the regulation of the resting membrane potential of pancreatic beta cells. The low channel activity of homodimeric KCNK1 may be due to sumoylation. The low channel activity may be due to rapid internalization from the cell membrane and retention in recycling endosomes. Permeable to monovalent cations with ion selectivity for K(+) &gt; Rb(+) &gt;&gt; NH4(+) &gt;&gt; Cs(+) = Na(+) = Li(+). The sequence is that of Potassium channel subfamily K member 1 from Oryctolagus cuniculus (Rabbit).